Consider the following 297-residue polypeptide: MILKLEVGVGLKNLNGKWGLDSSKEFYWEPDVEGGYRVYKVKSVIIEHQSLYQKIDIVELETWGKSLFLDGSLQSTESDEFIYHELLVHPAMRVHPSPKRVLICGVGEGKSVREVLKYPTVKEVIGVDIDKEVVALCQKHLGKTPIDDKRVRLVYQDVAEFIKNYRGEPFDVAIVDVTDDLDGPARSVHQLDFYKRLYEILGEKATVVVQGTSAFSKVKNVGFCHIYEILKEVFPFVIPYADYIPSFSDLWTFFVALKGIKDLTPRHEIPRDLKYYDEYTNERIFTLAKPLREKLGV.

Residues phenylalanine 26–lysine 258 form the PABS domain. Glutamine 53 contributes to the S-methyl-5'-thioadenosine binding site. The spermidine site is built by histidine 84 and glutamate 108. S-methyl-5'-thioadenosine is bound by residues aspartate 128 and aspartate 157–valine 158. The Proton acceptor role is filled by aspartate 176. Proline 184 contacts S-methyl-5'-thioadenosine.

It belongs to the spermidine/spermine synthase family. In terms of assembly, homodimer or homotetramer.

The protein localises to the cytoplasm. The enzyme catalyses S-adenosyl 3-(methylsulfanyl)propylamine + putrescine = S-methyl-5'-thioadenosine + spermidine + H(+). Its pathway is amine and polyamine biosynthesis; spermidine biosynthesis; spermidine from putrescine: step 1/1. In terms of biological role, catalyzes the irreversible transfer of a propylamine group from the amino donor S-adenosylmethioninamine (decarboxy-AdoMet) to putrescine (1,4-diaminobutane) to yield spermidine. The polypeptide is Polyamine aminopropyltransferase 2 (Caldanaerobacter subterraneus subsp. tengcongensis (strain DSM 15242 / JCM 11007 / NBRC 100824 / MB4) (Thermoanaerobacter tengcongensis)).